We begin with the raw amino-acid sequence, 1531 residues long: Multidrug resistance-associated protein 1 (1531 aa).

Residues 1 to 33 (MALRGFCSADGSDPLWDWNVTWYTSNPDFTKCF) lie on the Extracellular side of the membrane. The N-linked (GlcNAc...) asparagine glycan is linked to Asn-19. The chain crosses the membrane as a helical span at residues 34-54 (QNTVLVWVPCFYLWACFPFYF). Residues 55–74 (LYLSRHDRGYIQMTLLNKTK) lie on the Cytoplasmic side of the membrane. A helical transmembrane segment spans residues 75 to 95 (TALGFLLWIVCWADLFYSFWE). Over 96–100 (RSRGI) the chain is Extracellular. A helical transmembrane segment spans residues 101–121 (FLAPVFLVSPTLLGITMLLAT). Residues 122–133 (FLIQLERRKGVQ) lie on the Cytoplasmic side of the membrane. The helical transmembrane segment at 134–154 (SSGIMLTFWLVALLCALAILR) threads the bilayer. Residues 155–172 (SKIMTALKEDVQVDLFRD) lie on the Extracellular side of the membrane. Residues 173–193 (MTFYVYFSLVLIQLVLSCFSD) form a helical membrane-spanning segment. The Cytoplasmic segment spans residues 194 to 316 (RSPLFSETIH…KEWNPSLFKV (123 aa)). Phosphotyrosine is present on Tyr-277. Position 289 is a phosphoserine (Ser-289). The helical transmembrane segment at 317–337 (LYKTFGPYFLMSFFFKAIHDL) threads the bilayer. The ABC transmembrane type-1 1 domain occupies 325–608 (FLMSFFFKAI…LPMVISSIVQ (284 aa)). Residues 338–363 (MMFSGPEILKLLINFVNDTKAPDWQG) lie on the Extracellular side of the membrane. The helical transmembrane segment at 364 to 384 (YFYTALLFVAACLQTLVLHQY) threads the bilayer. Residues 385-440 (FHICFVSGMRIKTAVIGAVYRKALVITNAARKSSTVGEIVNLMSVDAQRFMDLATY) lie on the Cytoplasmic side of the membrane. The chain crosses the membrane as a helical span at residues 441–461 (INMIWSAPLQVILALYLLWRN). The Extracellular segment spans residues 462 to 464 (LGP). The chain crosses the membrane as a helical span at residues 465–485 (PILAGVAVMVLMVPVNAVMAM). Residues 486 to 547 (KTKTYQVAHM…VLKKSAYLAA (62 aa)) lie on the Cytoplasmic side of the membrane. At Lys-503 the chain carries N6-succinyllysine. The helical transmembrane segment at 548-568 (VGTFTWVCTPFLVALCTFAVY) threads the bilayer. Topologically, residues 569–590 (VTIDKNNVLDAQKAFVSLALFN) are extracellular. Residues 591 to 611 (ILRFPLNILPMVISSIVQASV) traverse the membrane as a helical segment. Over 612 to 967 (SLKRLRIFLS…VKLSVYWDYM (356 aa)) the chain is Cytoplasmic. The ABC transporter 1 domain maps to 644 to 868 (ITVRNATFTW…DGAFAEFLRT (225 aa)). 678–685 (GQVGCGKS) provides a ligand contact to ATP. A disordered region spans residues 871 to 893 (SAEQEQDPEDNGVTGVSGPGKEA). A phosphoserine mark is found at Ser-905, Ser-915, and Ser-930. Positions 917–938 (SSSYSGDVSRQHNSTAELQKDG) are disordered. Over residues 922-933 (GDVSRQHNSTAE) the composition is skewed to polar residues. Residues 968-988 (KAIGLFISFLSIFLFICNHVA) form a helical membrane-spanning segment. The region spanning 975-1256 (SFLSIFLFIC…LVRMSSEMET (282 aa)) is the ABC transmembrane type-1 2 domain. Over 989-1025 (ALASNYWLSLWTDDPIVNGTQEHTKVRLSVYGALGIS) the chain is Extracellular. An N-linked (GlcNAc...) asparagine glycan is attached at Asn-1006. Residues 1026–1046 (QGIAVFGYSMAVSIGGILASR) form a helical membrane-spanning segment. Over 1047–1089 (CLHVDLLHSILRSPMSFFERTPSGNLVNRFSKELDTVDSMIPE) the chain is Cytoplasmic. A helical membrane pass occupies residues 1090 to 1110 (VIKMFMGSLFNVIGACIVILL). Position 1111 (Ala-1111) is a topological domain, extracellular. A helical transmembrane segment spans residues 1112 to 1132 (TPIAAIIIPPLGLIYFFVQRF). Residues 1133-1203 (YVASSRQLKR…VANRWLAVRL (71 aa)) are Cytoplasmic-facing. Residues 1204–1224 (ECVGNCIVLFAALFAVISRHS) form a helical membrane-spanning segment. Residues 1225–1226 (LS) lie on the Extracellular side of the membrane. The chain crosses the membrane as a helical span at residues 1227–1247 (AGLVGLSVSYSLQVTTYLNWL). Residues 1248-1531 (VRMSSEMETN…YNMARDAGLV (284 aa)) are Cytoplasmic-facing. The 235-residue stretch at 1293–1527 (VEFRNYCLRY…RGLFYNMARD (235 aa)) folds into the ABC transporter 2 domain. ATP is bound at residue 1327–1334 (GRTGAGKS).

This sequence belongs to the ABC transporter superfamily. ABCC family. Conjugate transporter (TC 3.A.1.208) subfamily.

Its subcellular location is the cell membrane. It localises to the basolateral cell membrane. It carries out the reaction ATP + H2O + xenobioticSide 1 = ADP + phosphate + xenobioticSide 2.. It catalyses the reaction an S-substituted glutathione(in) + ATP + H2O = an S-substituted glutathione(out) + ADP + phosphate + H(+). The enzyme catalyses sphing-4-enine 1-phosphate(in) + ATP + H2O = sphing-4-enine 1-phosphate(out) + ADP + phosphate + H(+). The catalysed reaction is leukotriene C4(in) + ATP + H2O = leukotriene C4(out) + ADP + phosphate + H(+). It carries out the reaction 17beta-estradiol 17-O-(beta-D-glucuronate)(in) + ATP + H2O = 17beta-estradiol 17-O-(beta-D-glucuronate)(out) + ADP + phosphate + H(+). It catalyses the reaction daunorubicin(in) + ATP + H2O = daunorubicin(out) + ADP + phosphate + H(+). The enzyme catalyses vincristine(in) + ATP + H2O = vincristine(out) + ADP + phosphate + H(+). The catalysed reaction is 2',3'-cGAMP(in) + ATP + H2O = 2',3'-cGAMP(out) + ADP + phosphate + H(+). It carries out the reaction S-[(2E,6E,10E)-geranylgeranyl]-L-glutathione(in) + ATP + H2O = S-[(2E,6E,10E)-geranylgeranyl]-L-glutathione(out) + ADP + phosphate + H(+). It catalyses the reaction prostaglandin A2-S-(R)-glutathione(in) + ATP + H2O = prostaglandin A2-S-(R)-glutathione(out) + ADP + phosphate + H(+). The enzyme catalyses prostaglandin A2-S-(S)-glutathione(in) + ATP + H2O = prostaglandin A2-S-(S)-glutathione(out) + ADP + phosphate + H(+). Its activity is regulated as follows. MK 571 inhibits sphingosine 1-phosphate and leukotriene C4 export. Mediates export of organic anions and drugs from the cytoplasm. Mediates ATP-dependent transport of glutathione and glutathione conjugates, leukotriene C4, estradiol-17-beta-o-glucuronide, methotrexate, antiviral drugs and other xenobiotics. Confers resistance to anticancer drugs by decreasing accumulation of drug in cells, and by mediating ATP- and GSH-dependent drug export. Hydrolyzes ATP with low efficiency. Catalyzes the export of sphingosine 1-phosphate from mast cells independently of their degranulation. Participates in inflammatory response by allowing export of leukotriene C4 from leukotriene C4-synthesizing cells. Mediates ATP-dependent, GSH-independent cyclic GMP-AMP (cGAMP) export. Thus, by limiting intracellular cGAMP concentrations negatively regulates the cGAS-STING pathway. Exports S-geranylgeranyl-glutathione (GGG) in lymphoid cells and stromal compartments of lymphoid organs. ABCC1 (via extracellular transport) with GGT5 (via GGG catabolism) establish GGG gradients within lymphoid tissues to position P2RY8-positive lymphocytes at germinal centers in lymphoid follicles and restrict their chemotactic transmigration from blood vessels to the bone marrow parenchyma. Mediates basolateral export of GSH-conjugated R- and S-prostaglandin A2 diastereomers in polarized epithelial cells. The sequence is that of Multidrug resistance-associated protein 1 from Macaca fascicularis (Crab-eating macaque).